A 251-amino-acid polypeptide reads, in one-letter code: Hydroxyacylglutathione hydrolase (251 aa).

His-53, His-55, Asp-57, His-58, His-110, Asp-127, and His-165 together coordinate Zn(2+).

Belongs to the metallo-beta-lactamase superfamily. Glyoxalase II family. As to quaternary structure, monomer. The cofactor is Zn(2+).

The catalysed reaction is an S-(2-hydroxyacyl)glutathione + H2O = a 2-hydroxy carboxylate + glutathione + H(+). It functions in the pathway secondary metabolite metabolism; methylglyoxal degradation; (R)-lactate from methylglyoxal: step 2/2. Its function is as follows. Thiolesterase that catalyzes the hydrolysis of S-D-lactoyl-glutathione to form glutathione and D-lactic acid. The chain is Hydroxyacylglutathione hydrolase from Escherichia fergusonii (strain ATCC 35469 / DSM 13698 / CCUG 18766 / IAM 14443 / JCM 21226 / LMG 7866 / NBRC 102419 / NCTC 12128 / CDC 0568-73).